The primary structure comprises 547 residues: MAMGLFRVCLVVVTAIINHPLLFPRENATVPENEEEIIRKMQAHQEKLQLEQLRLEEEVARLAAEKEALEQVAEEGRQQNETRVAWDLWSTLCMILFLMIEVWRQDHQEGPSPECLGGEEDELPGLGGAPLQGLTLPNKATLGHFYERCIRGATADAARTREFLEGFVDDLLEALRSLCNRDTDMEVEDFIGVDSMYENWQVDRPLLCHLFVPFTPPEPYRFHPELWCSGRSVPLDRQGYGQIKVVRADGDTLSCICGKTKLGEDMLCLLHGRNSMAPPCGDMENLLCATDSLYLDTMQVMKWFQTALTRAWKGIAHKYEFDLAFGQLDSPGSLKIKFRSGKFMPFNLIPVIQCDDSDLYFVSHLPREPSEGTPASSTDWLLSFAVYERHFLRTTLKALPEGACHLSCLQIASFLLSKQSRLTGPSGLSSYHLKTALLHLLLLRQAADWKAGQLDARLHELLCFLEKSLLQKKLHHFFIGNRKVPEAMGLPEAVLRAEPLNLFRPFVLQRSLYRKTLDSFYEMLKNAPALISEYSLHVPSDQPTPKS.

Residues 1 to 15 (MAMGLFRVCLVVVTA) form the signal peptide. At 16–83 (IINHPLLFPR…EEGRQQNETR (68 aa)) the chain is on the extracellular side. N-linked (GlcNAc...) asparagine glycosylation is found at Asn-27 and Asn-80. A coiled-coil region spans residues 32–82 (ENEEEIIRKMQAHQEKLQLEQLRLEEEVARLAAEKEALEQVAEEGRQQNET). A helical membrane pass occupies residues 84–100 (VAWDLWSTLCMILFLMI). At 101–547 (EVWRQDHQEG…VPSDQPTPKS (447 aa)) the chain is on the cytoplasmic side. The interval 109-129 (EGPSPECLGGEEDELPGLGGA) is disordered. Ser-547 carries the phosphoserine modification.

It belongs to the ITPRIP family. In terms of assembly, interacts with ITPR. In terms of tissue distribution, detected in brain where it is concentrated in cerebellar Purkinje cells (at protein level).

The protein localises to the cell membrane. The protein resides in the nucleus outer membrane. In terms of biological role, enhances Ca(2+)-mediated inhibition of inositol 1,4,5-triphosphate receptor (ITPR) Ca(2+) release. In Homo sapiens (Human), this protein is Inositol 1,4,5-trisphosphate receptor-interacting protein (ITPRIP).